The primary structure comprises 299 residues: Aspartate carbamoyltransferase catalytic subunit (299 aa).

Residues R51 and T52 each contribute to the carbamoyl phosphate site. K79 is a binding site for L-aspartate. Carbamoyl phosphate-binding residues include R101, H130, and Q133. R163 and R215 together coordinate L-aspartate. Positions 256 and 257 each coordinate carbamoyl phosphate.

The protein belongs to the aspartate/ornithine carbamoyltransferase superfamily. ATCase family. Heterododecamer (2C3:3R2) of six catalytic PyrB chains organized as two trimers (C3), and six regulatory PyrI chains organized as three dimers (R2).

It catalyses the reaction carbamoyl phosphate + L-aspartate = N-carbamoyl-L-aspartate + phosphate + H(+). It functions in the pathway pyrimidine metabolism; UMP biosynthesis via de novo pathway; (S)-dihydroorotate from bicarbonate: step 2/3. Functionally, catalyzes the condensation of carbamoyl phosphate and aspartate to form carbamoyl aspartate and inorganic phosphate, the committed step in the de novo pyrimidine nucleotide biosynthesis pathway. The sequence is that of Aspartate carbamoyltransferase catalytic subunit from Ehrlichia chaffeensis (strain ATCC CRL-10679 / Arkansas).